Reading from the N-terminus, the 287-residue chain is Pyridoxal kinase PdxY (287 aa).

Substrate is bound by residues Ser-10 and 45-46 (TQ). ATP contacts are provided by residues Asp-112, Ala-144, Glu-149, Lys-182, and 209-212 (RPLV). Residue Asp-224 coordinates substrate.

It belongs to the pyridoxine kinase family. PdxY subfamily. As to quaternary structure, homodimer. It depends on Mg(2+) as a cofactor.

It catalyses the reaction pyridoxal + ATP = pyridoxal 5'-phosphate + ADP + H(+). It participates in cofactor metabolism; pyridoxal 5'-phosphate salvage; pyridoxal 5'-phosphate from pyridoxal: step 1/1. Functionally, pyridoxal kinase involved in the salvage pathway of pyridoxal 5'-phosphate (PLP). Catalyzes the phosphorylation of pyridoxal to PLP. This Escherichia coli O157:H7 protein is Pyridoxal kinase PdxY.